The chain runs to 216 residues: Thiamine-phosphate synthase (216 aa).

4-amino-2-methyl-5-(diphosphooxymethyl)pyrimidine-binding positions include 40–44 and asparagine 72; that span reads QLRIK. Residues aspartate 73 and aspartate 92 each coordinate Mg(2+). Position 111 (serine 111) interacts with 4-amino-2-methyl-5-(diphosphooxymethyl)pyrimidine. Residue 137–139 participates in 2-[(2R,5Z)-2-carboxy-4-methylthiazol-5(2H)-ylidene]ethyl phosphate binding; it reads TTT. Lysine 140 serves as a coordination point for 4-amino-2-methyl-5-(diphosphooxymethyl)pyrimidine. 2-[(2R,5Z)-2-carboxy-4-methylthiazol-5(2H)-ylidene]ethyl phosphate-binding positions include glycine 169 and 189–190; that span reads VS.

This sequence belongs to the thiamine-phosphate synthase family. It depends on Mg(2+) as a cofactor.

It carries out the reaction 2-[(2R,5Z)-2-carboxy-4-methylthiazol-5(2H)-ylidene]ethyl phosphate + 4-amino-2-methyl-5-(diphosphooxymethyl)pyrimidine + 2 H(+) = thiamine phosphate + CO2 + diphosphate. It catalyses the reaction 2-(2-carboxy-4-methylthiazol-5-yl)ethyl phosphate + 4-amino-2-methyl-5-(diphosphooxymethyl)pyrimidine + 2 H(+) = thiamine phosphate + CO2 + diphosphate. The catalysed reaction is 4-methyl-5-(2-phosphooxyethyl)-thiazole + 4-amino-2-methyl-5-(diphosphooxymethyl)pyrimidine + H(+) = thiamine phosphate + diphosphate. It functions in the pathway cofactor biosynthesis; thiamine diphosphate biosynthesis; thiamine phosphate from 4-amino-2-methyl-5-diphosphomethylpyrimidine and 4-methyl-5-(2-phosphoethyl)-thiazole: step 1/1. In terms of biological role, condenses 4-methyl-5-(beta-hydroxyethyl)thiazole monophosphate (THZ-P) and 2-methyl-4-amino-5-hydroxymethyl pyrimidine pyrophosphate (HMP-PP) to form thiamine monophosphate (TMP). The polypeptide is Thiamine-phosphate synthase (Photorhabdus laumondii subsp. laumondii (strain DSM 15139 / CIP 105565 / TT01) (Photorhabdus luminescens subsp. laumondii)).